A 159-amino-acid chain; its full sequence is Phosphopantetheine adenylyltransferase (159 aa).

Position 16 (His16) interacts with ATP. Substrate-binding residues include Lys40, Met72, and Arg86. ATP contacts are provided by residues 87–89, Glu97, and 122–128; these read GLR and YQYLSAS.

The protein belongs to the bacterial CoaD family. Homohexamer. It depends on Mg(2+) as a cofactor.

Its subcellular location is the cytoplasm. It carries out the reaction (R)-4'-phosphopantetheine + ATP + H(+) = 3'-dephospho-CoA + diphosphate. It participates in cofactor biosynthesis; coenzyme A biosynthesis; CoA from (R)-pantothenate: step 4/5. Its function is as follows. Reversibly transfers an adenylyl group from ATP to 4'-phosphopantetheine, yielding dephospho-CoA (dPCoA) and pyrophosphate. In Dehalococcoides mccartyi (strain ATCC BAA-2266 / KCTC 15142 / 195) (Dehalococcoides ethenogenes (strain 195)), this protein is Phosphopantetheine adenylyltransferase.